We begin with the raw amino-acid sequence, 524 residues long: MTRRALVSVSDKTGLVPFARRLAALGVELLSTGGTQKALAEAGVPVTGVGDYTQAPEILGGRVKTLHPRVHGGILYRRGLASDEADVKARDIPPIDLVVVNLYPFREAVAAGKPFETCVEEIDIGGPTMVRSAAKNSAHVGVVVDPADYDKVAAELEATRALSDATRFYLMKKAFAHTAAYDAAISEYLTARETPEAAPAHFPATLAAVYTKAYDLRYGENPHQAGAFYRAAREPEEPSVAFAQVLQGKELSYNNLLDLQAALAGVMEFDETACVVIKHNTPCGVSTGRTAGEAFARARECDPVSAFGGIVALNRPVDEATASELTSLFLECVIAPGYDAAARAALAVKKNLRLLEAPRLGAARATWRRRPEEGRELRSIPGGLLVMDRDLGSVRREDCKVMTKRAPTEQEWKDLLFAWKVVKHVKSNAIVFAKDDRTVAIGGGQTSRVESVKTAVMKAALDVRGSSVGSDAFFPFADGVEEIIKAGATAIIQPGGSMRDAEVIAAADKAGIAMVATGMRHFRH.

An MGS-like domain is found at 1 to 144 (MTRRALVSVS…KNSAHVGVVV (144 aa)).

The protein belongs to the PurH family.

It carries out the reaction (6R)-10-formyltetrahydrofolate + 5-amino-1-(5-phospho-beta-D-ribosyl)imidazole-4-carboxamide = 5-formamido-1-(5-phospho-D-ribosyl)imidazole-4-carboxamide + (6S)-5,6,7,8-tetrahydrofolate. The catalysed reaction is IMP + H2O = 5-formamido-1-(5-phospho-D-ribosyl)imidazole-4-carboxamide. It participates in purine metabolism; IMP biosynthesis via de novo pathway; 5-formamido-1-(5-phospho-D-ribosyl)imidazole-4-carboxamide from 5-amino-1-(5-phospho-D-ribosyl)imidazole-4-carboxamide (10-formyl THF route): step 1/1. Its pathway is purine metabolism; IMP biosynthesis via de novo pathway; IMP from 5-formamido-1-(5-phospho-D-ribosyl)imidazole-4-carboxamide: step 1/1. In Anaeromyxobacter dehalogenans (strain 2CP-C), this protein is Bifunctional purine biosynthesis protein PurH.